The sequence spans 350 residues: Protein RecA (350 aa).

67-74 (GPESSGKT) is a binding site for ATP.

Belongs to the RecA family.

Its subcellular location is the cytoplasm. In terms of biological role, can catalyze the hydrolysis of ATP in the presence of single-stranded DNA, the ATP-dependent uptake of single-stranded DNA by duplex DNA, and the ATP-dependent hybridization of homologous single-stranded DNAs. It interacts with LexA causing its activation and leading to its autocatalytic cleavage. In Chlamydia felis (strain Fe/C-56) (Chlamydophila felis), this protein is Protein RecA.